Reading from the N-terminus, the 460-residue chain is tRNA modification GTPase MnmE (460 aa).

Residues R24, E81, and K121 each contribute to the (6S)-5-formyl-5,6,7,8-tetrahydrofolate site. One can recognise a TrmE-type G domain in the interval 218–385 (GMVVAIAGPP…LIAAIEDFAA (168 aa)). Residues 228 to 233 (NVGKST), 247 to 253 (SPHAGTT), and 272 to 275 (DTAG) contribute to the GTP site. Mg(2+) is bound by residues S232 and T253. K460 provides a ligand contact to (6S)-5-formyl-5,6,7,8-tetrahydrofolate.

This sequence belongs to the TRAFAC class TrmE-Era-EngA-EngB-Septin-like GTPase superfamily. TrmE GTPase family. Homodimer. Heterotetramer of two MnmE and two MnmG subunits. It depends on K(+) as a cofactor.

The protein localises to the cytoplasm. Its function is as follows. Exhibits a very high intrinsic GTPase hydrolysis rate. Involved in the addition of a carboxymethylaminomethyl (cmnm) group at the wobble position (U34) of certain tRNAs, forming tRNA-cmnm(5)s(2)U34. The chain is tRNA modification GTPase MnmE from Rhodopseudomonas palustris (strain BisB5).